The sequence spans 53 residues: Weak toxin NWT (53 aa).

Intrachain disulfides connect C6–C11, C17–C33, and C37–C48.

Belongs to the three-finger toxin family. Ancestral subfamily. Orphan group II sub-subfamily. In terms of tissue distribution, expressed by the venom gland.

It is found in the secreted. In terms of biological role, binds with low affinity and weakly inhibits muscle nicotinic acetylcholine receptor (nAChR). The protein is Weak toxin NWT of Naja kaouthia (Monocled cobra).